The sequence spans 917 residues: Probable dipeptidyl-aminopeptidase B (917 aa).

Positions 1–75 (MTVGRRLNDE…KYRDDVEEDW (75 aa)) are disordered. Topologically, residues 1-93 (MTVGRRLNDE…NAKPSQRRTQ (93 aa)) are cytoplasmic. The span at 27 to 39 (DSSSTASVSLTLV) shows a compositional bias: low complexity. Over residues 40–49 (DGTNHTTAKP) the composition is skewed to polar residues. The span at 57 to 69 (VSRDRYADEKYRD) shows a compositional bias: basic and acidic residues. The helical; Signal-anchor for type II membrane protein transmembrane segment at 94–114 (IVFWLLVALCVGGWAVAFLFF) threads the bilayer. The Vacuolar segment spans residues 115–917 (VTSPGNTIST…KRVIRRLLHR (803 aa)). Positions 124–133 (TTPDTGSGSP) are enriched in polar residues. The disordered stretch occupies residues 124 to 150 (TTPDTGSGSPDSDVIKPGSPPAGKKIP). N-linked (GlcNAc...) asparagine glycans are attached at residues N206, N302, and N354. S759 (charge relay system) is an active-site residue. A glycan (N-linked (GlcNAc...) asparagine) is linked at N818. Residues D836 and H869 each act as charge relay system in the active site.

Belongs to the peptidase S9B family.

The protein resides in the vacuole membrane. The enzyme catalyses Release of an N-terminal dipeptide, Xaa-Yaa-|-Zaa-, from a polypeptide, preferentially when Yaa is Pro, provided Zaa is neither Pro nor hydroxyproline.. Functionally, type IV dipeptidyl-peptidase which removes N-terminal dipeptides sequentially from polypeptides having unsubstituted N-termini provided that the penultimate residue is proline. This is Probable dipeptidyl-aminopeptidase B (DAPB) from Arthroderma gypseum (strain ATCC MYA-4604 / CBS 118893) (Microsporum gypseum).